Here is a 67-residue protein sequence, read N- to C-terminus: LPS-assembly lipoprotein LptM (67 aa).

The first 19 residues, 1–19 (MKNVFKTLAVLLTLFSLTG), serve as a signal peptide directing secretion. C20 carries N-palmitoyl cysteine lipidation. The S-diacylglycerol cysteine moiety is linked to residue C20. Residues 26-67 (LYFPPADKNAPPPTKKVDSQTQSTMPDKNDRATGDGPSQVNY) are disordered.

This sequence belongs to the LptM family. Interacts with the outer membrane embedded portion of the LPS translocon formed by LptD and LptE (LptDE).

Its subcellular location is the cell outer membrane. Its function is as follows. Component of the lipopolysaccharide (LPS) transport (Lpt) pathway that promotes efficient assembly of the outer membrane LPS translocon (LptDE) by the BAM complex. Facilitates oxidative maturation of LptD by stabilizing a conformation of the LPS translocon in which LptD can efficiently acquire native disulfide bonds, thereby activating the LPS translocon. The polypeptide is LPS-assembly lipoprotein LptM (Salmonella typhi).